The sequence spans 691 residues: MEHRAFKWPQPLAGNKPRIWYVGDYNPDQWPEEVWDEDVALMQQAGVNLVSVAIFSWAKLEPEEGVYDFDWLDRVIDKLGKAGIAVDLASGTASPPMWMTQAHPEILWVDYRGDVCQPGARQHWRATSPVFLDYALNLCRKMAEHYKDNPYVVSWHVSNEYGCHNRFDYSEDAERAFQKWCEKKYGTIDAVNDAWGTAFWAQRMNNFSEIIPPRFIGDGNFMNPGKLLDWKRFSSDALLDFYKAERDALLEIAPKPQTTNFMVSAGCTVLDYDKWGHDVDFVSNDHYFSPGEAHFDEMAYAACLTDGIARKNPWFLMEHSTSAVNWRPTNYRLEPGELVRDSLAHLAMGADAICYFQWRQSKAGAEKWHSAMVPHAGPDSQIFRDVCELGADLNKLADEGLLSTKLVKSKVAVVFDYESQWATEHTATPTQEVRHWTEPLDWFRALADNGLTADVVPVRGPWDEYEAVVLPSLAILSEQTTRRVREYVANGGKLFVTYYTGLVDDRDHVWLGGYPGSIRDVVGVRVEEFAPMGTDAPGTMDHLDLDNGTVAHDFADVITSVADTAHVVASFKADKWTGFDGAPAITVNDFGDGKAAYVGARLGREGLAKSLPALLEELGIETSAEDDRGEVVRVERADETGENHFVFLFNRTHDVAVVDVEGEPLVASLAQVNESEHTAAIQPNGVLVVKL.

R121 and N159 together coordinate substrate. Catalysis depends on E160, which acts as the Proton donor. The active-site Nucleophile is E318. Residues W326 and 366–369 contribute to the substrate site; that span reads EKWH.

Belongs to the glycosyl hydrolase 42 family.

The enzyme catalyses Hydrolysis of terminal non-reducing beta-D-galactose residues in beta-D-galactosides.. Its function is as follows. Specific for beta-D-anomer-linked galactoside substrates. Hydrolyzes o-nitrophenyl-beta-D-galactopyranoside (ONPG), chromogen 5-bromo-4-chloro-3-indolyl-beta-D-galactopyranoside (X-gal) and to a lesser extent lactose. Hydrolyzes p-nitrophenyl-beta-D-galacturonide very slightly. Does not hydrolyze maltose, sucrose, raffinose or melibiose. Has some transgalactosylation activity yielding galacto-oligosaccharides (GaOS), including O-beta-D-galactopyranosyl-(1,3)-O-beta-D-galactopyranosyl-(1-4)-D-glucopyranose. This is Beta-galactosidase III from Bifidobacterium longum subsp. infantis.